A 209-amino-acid polypeptide reads, in one-letter code: Uracil phosphoribosyltransferase (209 aa).

5-phospho-alpha-D-ribose 1-diphosphate is bound by residues arginine 79, arginine 104, and 131–139 (TPVVATANT). Uracil-binding positions include isoleucine 194 and 199–201 (GDA). Residue aspartate 200 participates in 5-phospho-alpha-D-ribose 1-diphosphate binding.

This sequence belongs to the UPRTase family. Requires Mg(2+) as cofactor.

The enzyme catalyses UMP + diphosphate = 5-phospho-alpha-D-ribose 1-diphosphate + uracil. Its pathway is pyrimidine metabolism; UMP biosynthesis via salvage pathway; UMP from uracil: step 1/1. Its activity is regulated as follows. Allosterically activated by GTP. In terms of biological role, catalyzes the conversion of uracil and 5-phospho-alpha-D-ribose 1-diphosphate (PRPP) to UMP and diphosphate. The protein is Uracil phosphoribosyltransferase of Bradyrhizobium diazoefficiens (strain JCM 10833 / BCRC 13528 / IAM 13628 / NBRC 14792 / USDA 110).